We begin with the raw amino-acid sequence, 617 residues long: mRNA export factor MEX67 (617 aa).

Over residues 1-10 the composition is skewed to gly residues; that stretch reads MSYRGRGGGY. A disordered region spans residues 1–24; sequence MSYRGRGGGYNNNRGQFSSGPHQH. LRR repeat units follow at residues 185-206, 211-232, and 237-258; these read DVDSIDLSNNELQDLQTLTSMA, KLQNLSLQNNNFTKIKVFETWR, and FLRELILFNNPIVQTNDPAEIQ. One can recognise an NTF2 domain in the interval 309–499; the sequence is LATNFIANYL…MIVASDTLLI (191 aa). Disordered regions lie at residues 442 to 469 and 513 to 554; these read EVDGSASSAPSGPRGGSRYHSGPKHKRI and LPSN…TTAD. 2 stretches are compositionally biased toward low complexity: residues 445-459 and 526-542; these read GSASSAPSGPRGGSR and ATSTPSPLPPTTITTPQ. In terms of domain architecture, TAP-C spans 565–617; the sequence is QIQQELLVKILLETKLNINYGIMLCEQSNWDYQQASVNFKNSAASLPSDAFVQ.

The protein belongs to the NXF family. Interacts with nucleoporin complex protein MTR2.

The protein localises to the nucleus. It localises to the cytoplasm. Its function is as follows. Involved in the export of mRNA from the nucleus to the cytoplasm. This chain is mRNA export factor MEX67, found in Candida albicans (strain SC5314 / ATCC MYA-2876) (Yeast).